A 223-amino-acid chain; its full sequence is RNA-free ribonuclease P (223 aa).

Belongs to the HARP family.

The enzyme catalyses Endonucleolytic cleavage of RNA, removing 5'-extranucleotides from tRNA precursor.. In terms of biological role, RNA-free RNase P that catalyzes the removal of the 5'-leader sequence from pre-tRNA to produce the mature 5'-terminus. The sequence is that of RNA-free ribonuclease P from Methanococcus maripaludis (strain C7 / ATCC BAA-1331).